We begin with the raw amino-acid sequence, 115 residues long: Large ribosomal subunit protein uL24 (115 aa).

Belongs to the universal ribosomal protein uL24 family. As to quaternary structure, part of the 50S ribosomal subunit.

Its function is as follows. One of two assembly initiator proteins, it binds directly to the 5'-end of the 23S rRNA, where it nucleates assembly of the 50S subunit. Functionally, one of the proteins that surrounds the polypeptide exit tunnel on the outside of the subunit. This chain is Large ribosomal subunit protein uL24, found in Amoebophilus asiaticus (strain 5a2).